The chain runs to 283 residues: MLIIETLPLLRQQIRRLRMEGKRVALVPTMGNLHDGHMKLVDEAKARADVVVVSIFVNPMQFDRPEDLARYPRTLQEDCEKLNKRKVDLVFAPSVKEIYPNGTETHTYVDVPGLSTMLEGASRPGHFRGVSTIVSKLFNLVQPDIACFGEKDFQQLALIRKMVADMGFDIEIVGVPIMRAKDGLALSSRNGYLTAEQCQIAPGLYKVLSSIADKLQAGERDLDEIIAIAGQELNEKGFRADDIQIRDADTLLEVSETSKRAVILVAAWLGDARLIDNKIVELA.

30-37 (MGNLHDGH) is an ATP binding site. The active-site Proton donor is His37. Residue Gln61 coordinates (R)-pantoate. Gln61 serves as a coordination point for beta-alanine. 149-152 (GEKD) serves as a coordination point for ATP. Gln155 is a (R)-pantoate binding site. ATP is bound at residue 186-189 (LSSR).

Belongs to the pantothenate synthetase family. Homodimer.

The protein resides in the cytoplasm. The enzyme catalyses (R)-pantoate + beta-alanine + ATP = (R)-pantothenate + AMP + diphosphate + H(+). The protein operates within cofactor biosynthesis; (R)-pantothenate biosynthesis; (R)-pantothenate from (R)-pantoate and beta-alanine: step 1/1. In terms of biological role, catalyzes the condensation of pantoate with beta-alanine in an ATP-dependent reaction via a pantoyl-adenylate intermediate. This Shigella dysenteriae serotype 1 (strain Sd197) protein is Pantothenate synthetase.